The following is a 330-amino-acid chain: Ketol-acid reductoisomerase (NADP(+)) (330 aa).

One can recognise a KARI N-terminal Rossmann domain in the interval 2–182 (IHVYYDKDAN…GCTKAGVIET (181 aa)). NADP(+)-binding positions include 25–28 (YGSQ), Arg48, Ser51, Ser53, and 83–86 (DEVQ). His108 is an active-site residue. Gly134 lines the NADP(+) pocket. A KARI C-terminal knotted domain is found at 183 to 328 (TFKEETETDL…KKLRDMMPWI (146 aa)). Asp191, Glu195, Glu227, and Glu231 together coordinate Mg(2+). Ser252 is a binding site for substrate.

This sequence belongs to the ketol-acid reductoisomerase family. It depends on Mg(2+) as a cofactor.

It catalyses the reaction (2R)-2,3-dihydroxy-3-methylbutanoate + NADP(+) = (2S)-2-acetolactate + NADPH + H(+). The enzyme catalyses (2R,3R)-2,3-dihydroxy-3-methylpentanoate + NADP(+) = (S)-2-ethyl-2-hydroxy-3-oxobutanoate + NADPH + H(+). It participates in amino-acid biosynthesis; L-isoleucine biosynthesis; L-isoleucine from 2-oxobutanoate: step 2/4. The protein operates within amino-acid biosynthesis; L-valine biosynthesis; L-valine from pyruvate: step 2/4. Functionally, involved in the biosynthesis of branched-chain amino acids (BCAA). Catalyzes an alkyl-migration followed by a ketol-acid reduction of (S)-2-acetolactate (S2AL) to yield (R)-2,3-dihydroxy-isovalerate. In the isomerase reaction, S2AL is rearranged via a Mg-dependent methyl migration to produce 3-hydroxy-3-methyl-2-ketobutyrate (HMKB). In the reductase reaction, this 2-ketoacid undergoes a metal-dependent reduction by NADPH to yield (R)-2,3-dihydroxy-isovalerate. This Halothermothrix orenii (strain H 168 / OCM 544 / DSM 9562) protein is Ketol-acid reductoisomerase (NADP(+)).